Reading from the N-terminus, the 952-residue chain is Lysosomal alpha-glucosidase (952 aa).

The N-terminal stretch at 1-27 (MRVRHPPCSRRLLAICALVSLATAALL) is a signal peptide. The propeptide occupies 28 to 69 (GHILLHDFLLVPRELSGSSPVLEETHPAHQQGASRPGPRDAQ). The tract at residues 47 to 80 (PVLEETHPAHQQGASRPGPRDAQAHLGRPRAVPT) is disordered. Residues 80 to 131 (TQCDVPPNSRFDCAPDKAITREQCDARGCCYIPAKQGLRGAQMGQPWCFFPP) form the P-type domain. Intrachain disulfides connect cysteine 82–cysteine 109, cysteine 92–cysteine 108, and cysteine 103–cysteine 127. Asparagine 140, asparagine 233, and asparagine 390 each carry an N-linked (GlcNAc...) asparagine glycan. Substrate is bound at residue aspartate 404. A glycan (N-linked (GlcNAc...) asparagine) is linked at asparagine 470. The active-site Nucleophile is the aspartate 518. Glutamate 521 is an active-site residue. Cysteine 533 and cysteine 558 are disulfide-bonded. Substrate-binding residues include arginine 600 and aspartate 616. Cysteine 647 and cysteine 658 are oxidised to a cystine. Asparagine 652 carries an N-linked (GlcNAc...) asparagine glycan. Histidine 674 lines the substrate pocket. N-linked (GlcNAc...) asparagine glycans are attached at residues asparagine 882 and asparagine 925.

The protein belongs to the glycosyl hydrolase 31 family.

The protein resides in the lysosome. It is found in the lysosome membrane. It carries out the reaction Hydrolysis of terminal, non-reducing (1-&gt;4)-linked alpha-D-glucose residues with release of alpha-D-glucose.. In terms of biological role, essential for the degradation of glycogen in lysosomes. Has highest activity on alpha-1,4-linked glycosidic linkages, but can also hydrolyze alpha-1,6-linked glucans. This is Lysosomal alpha-glucosidase (GAA) from Pongo abelii (Sumatran orangutan).